Here is a 699-residue protein sequence, read N- to C-terminus: Kinesin-II 85 kDa subunit (699 aa).

Positions 10-342 (NVRVVVRCRP…LRYANRAKNI (333 aa)) constitute a Kinesin motor domain. 97-104 (GQTGTGKT) lines the ATP pocket. A coiled-coil region spans residues 341–619 (NIKNKAKINE…EDIGEWQLKC (279 aa)). Disordered stretches follow at residues 369 to 415 (KQIS…LSPE), 432 to 456 (EEKK…ESEL), and 660 to 699 (GMKY…ALLQ). Over residues 376–395 (EGLDDDEESGSEESGDEEAG) the composition is skewed to acidic residues. A compositionally biased stretch (basic residues) spans 400–411 (KKKRKGKNPKRK). The tract at residues 620–699 (VAYTGNNMRK…MASSIDALLQ (80 aa)) is globular. Polar residues predominate over residues 667-679 (QGKSGRPKTSSGR).

It belongs to the TRAFAC class myosin-kinesin ATPase superfamily. Kinesin family. Kinesin II subfamily. In terms of assembly, heterotrimer of a 115 kDa subunit (KAP115) and two kinesin-like subunits of 95 kDa (KRP95) and 85 kDa (KRP85). The N-terminus is blocked.

Its subcellular location is the cytoplasm. The protein resides in the cytoskeleton. The chain is Kinesin-II 85 kDa subunit (KRP85) from Strongylocentrotus purpuratus (Purple sea urchin).